Consider the following 807-residue polypeptide: Ribosome-releasing factor 2, mitochondrial (807 aa).

A mitochondrion-targeting transit peptide spans 1–18 (MFCRKYAFQTWKQFSRFY). The region spanning 27–315 (SKTRNIGIIA…GITKYLPSPL (289 aa)) is the tr-type G domain. Residues 36 to 43 (AHIDAGKT), 100 to 104 (DTPGH), and 154 to 157 (NKMD) contribute to the GTP site.

Belongs to the TRAFAC class translation factor GTPase superfamily. Classic translation factor GTPase family. EF-G/EF-2 subfamily.

It localises to the mitochondrion. In terms of biological role, mitochondrial GTPase that mediates the disassembly of ribosomes from messenger RNA at the termination of mitochondrial protein biosynthesis. Not involved in the GTP-dependent ribosomal translocation step during translation elongation. This chain is Ribosome-releasing factor 2, mitochondrial, found in Candida dubliniensis (strain CD36 / ATCC MYA-646 / CBS 7987 / NCPF 3949 / NRRL Y-17841) (Yeast).